The following is a 113-amino-acid chain: Large ribosomal subunit protein bL19 (113 aa).

It belongs to the bacterial ribosomal protein bL19 family.

This protein is located at the 30S-50S ribosomal subunit interface and may play a role in the structure and function of the aminoacyl-tRNA binding site. The sequence is that of Large ribosomal subunit protein bL19 from Mycolicibacterium smegmatis (strain ATCC 700084 / mc(2)155) (Mycobacterium smegmatis).